Here is a 603-residue protein sequence, read N- to C-terminus: MIRHRLRLALSAAPVTATGRRTRSKTAPRRSLSTQQTQSSASSSSNNLDGDGRAFVPLRKQLKDESKAKRLTGRGKRSKSASSQVEGWELTVGIEVHAQLDTDSKLFSRASAAHDDAPNANVALFDLAFPGSQPWFQPATLIPALRAAIAFGCEIQSVSHFDRKHYFYQDQPAGYQITQYYEPYARSGALWLYPHDGIAPEDGDAVRVGIKQIQMEQDTAKSQELPSHTVLLDFNRVSRPLIEIITLPEIHSPATAAACVRKIQALLQSCGAVNTGMEMGGLRADVNVSVRRTGQVEQHGYEGVSGLGQRTEIKNLSSFKAVEDAIIAERDRQIAVLEGGGKVEGETRGWTIGSTETKRLREKEGSVDYRYMPDPDIGPVVVGAELVERLRTSMPPSPDELLRMLTQDPMYMLTVEDAKPLIELDDCARLEYYLDAVDSLVVLQRDAAAAAAASAASTVSATGKTVGNWVLHELGGLFSRADAAWDGERVPASSLAAIVHLVGTKQITGSTAKSLLSTVFAGEHGGRTVQEMVEQDGLLLRPLAQEEYVSMARTVMAQHPQLVEQIRQGQQGKIGFFVGQIKRMGERGRVEAQRAEEAVRSLL.

Residues methionine 1–leucine 32 constitute a mitochondrion transit peptide. Positions alanine 12–arginine 59 are disordered. Positions serine 31–leucine 48 are enriched in low complexity.

Belongs to the GatB/GatE family. GatB subfamily. Subunit of the heterotrimeric GatCAB amidotransferase (AdT) complex, composed of A, B and C subunits.

The protein localises to the mitochondrion. It carries out the reaction L-glutamyl-tRNA(Gln) + L-glutamine + ATP + H2O = L-glutaminyl-tRNA(Gln) + L-glutamate + ADP + phosphate + H(+). Functionally, allows the formation of correctly charged Gln-tRNA(Gln) through the transamidation of misacylated Glu-tRNA(Gln) in the mitochondria. The reaction takes place in the presence of glutamine and ATP through an activated gamma-phospho-Glu-tRNA(Gln). The polypeptide is Glutamyl-tRNA(Gln) amidotransferase subunit B, mitochondrial (Arthroderma otae (strain ATCC MYA-4605 / CBS 113480) (Microsporum canis)).